The chain runs to 80 residues: uncharacterized protein (80 aa).

4Fe-4S ferredoxin-type domains are found at residues 21–49 (KIIE…AIKN) and 50–80 (NRVV…LYDA). [4Fe-4S] cluster-binding residues include C30, C33, C36, C40, C60, C63, C66, and C70.

[4Fe-4S] cluster is required as a cofactor.

This is an uncharacterized protein from Methanocaldococcus jannaschii (strain ATCC 43067 / DSM 2661 / JAL-1 / JCM 10045 / NBRC 100440) (Methanococcus jannaschii).